We begin with the raw amino-acid sequence, 153 residues long: Large ribosomal subunit protein uL22 (153 aa).

It belongs to the universal ribosomal protein uL22 family. As to quaternary structure, part of the 50S ribosomal subunit.

In terms of biological role, this protein binds specifically to 23S rRNA. It makes multiple contacts with different domains of the 23S rRNA in the assembled 50S subunit and ribosome. Its function is as follows. The globular domain of the protein is located near the polypeptide exit tunnel on the outside of the subunit, while an extended beta-hairpin is found that lines the wall of the exit tunnel in the center of the 70S ribosome. The sequence is that of Large ribosomal subunit protein uL22 from Methanoculleus marisnigri (strain ATCC 35101 / DSM 1498 / JR1).